The following is a 187-amino-acid chain: MKIGKLNSIVMVLFFDLLVACSIGLVERTNAALESSSKDLKNKILKIKKEATGKGVLFEAFTGLKTGSKVTSGGLALREAKVQAIVETGKFLKIIEEEALKLKETGNSGQFLAMFDLMLEVVESLEDVGIIGLKARVLEESKNNPINTAERLLAAKAQIENQLKVVKEKQNIENGGEKKNNKSKKKK.

A signal peptide spans 1–20 (MKIGKLNSIVMVLFFDLLVA).

Belongs to the decorin-binding protein family.

In terms of biological role, binds to decorin which may mediate the adherence of B.burgdorferi to collagen fibers in skin and other tissues. The chain is Decorin-binding protein B (dbpB) from Borreliella burgdorferi (strain N40) (Borrelia burgdorferi).